A 364-amino-acid chain; its full sequence is Sec-independent protein translocase protein TatC (364 aa).

Transmembrane regions (helical) follow at residues 42–62, 107–127, 139–159, 160–180, 194–214, 225–245, and 246–266; these read IALL…PRIF, MIAA…SFIT, LTFV…AYLT, LSTG…SVLD, IFGL…AGIV, PEIF…DPFT, and MLAL…IGWL. Positions 277-364 are disordered; it reads TSPYADLDDD…STDVTHGDIT (88 aa). Acidic residues predominate over residues 282-295; that stretch reads DLDDDETSPLDFDD. Low complexity predominate over residues 301–320; it reads AASAGPAATATSPGTANPPG. Over residues 324-344 the composition is skewed to polar residues; sequence PPGTANPVGTANPVGTGSSTP.

Belongs to the TatC family. As to quaternary structure, the Tat system comprises two distinct complexes: a TatABC complex, containing multiple copies of TatA, TatB and TatC subunits, and a separate TatA complex, containing only TatA subunits. Substrates initially bind to the TatABC complex, which probably triggers association of the separate TatA complex to form the active translocon.

The protein resides in the cell membrane. In terms of biological role, part of the twin-arginine translocation (Tat) system that transports large folded proteins containing a characteristic twin-arginine motif in their signal peptide across membranes. Together with TatB, TatC is part of a receptor directly interacting with Tat signal peptides. The chain is Sec-independent protein translocase protein TatC from Frankia casuarinae (strain DSM 45818 / CECT 9043 / HFP020203 / CcI3).